A 306-amino-acid polypeptide reads, in one-letter code: Ribonuclease Z (306 aa).

Zn(2+)-binding residues include histidine 63, histidine 65, aspartate 67, histidine 68, histidine 140, aspartate 211, and histidine 269. Aspartate 67 acts as the Proton acceptor in catalysis.

The protein belongs to the RNase Z family. As to quaternary structure, homodimer. Zn(2+) serves as cofactor.

It carries out the reaction Endonucleolytic cleavage of RNA, removing extra 3' nucleotides from tRNA precursor, generating 3' termini of tRNAs. A 3'-hydroxy group is left at the tRNA terminus and a 5'-phosphoryl group is left at the trailer molecule.. Functionally, zinc phosphodiesterase, which displays some tRNA 3'-processing endonuclease activity. Probably involved in tRNA maturation, by removing a 3'-trailer from precursor tRNA. The chain is Ribonuclease Z from Listeria welshimeri serovar 6b (strain ATCC 35897 / DSM 20650 / CCUG 15529 / CIP 8149 / NCTC 11857 / SLCC 5334 / V8).